Here is a 397-residue protein sequence, read N- to C-terminus: Phosphoglycerate kinase (397 aa).

Substrate contacts are provided by residues 21–23 (DFN), R36, 59–62 (HCGR), R118, and R151. ATP contacts are provided by residues K201, E323, and 353–356 (GGDT).

The protein belongs to the phosphoglycerate kinase family. As to quaternary structure, monomer.

It localises to the cytoplasm. The catalysed reaction is (2R)-3-phosphoglycerate + ATP = (2R)-3-phospho-glyceroyl phosphate + ADP. The protein operates within carbohydrate degradation; glycolysis; pyruvate from D-glyceraldehyde 3-phosphate: step 2/5. The polypeptide is Phosphoglycerate kinase (Bartonella tribocorum (strain CIP 105476 / IBS 506)).